The sequence spans 624 residues: Plastin-2 (624 aa).

2 consecutive EF-hand domains span residues 9-44 (EEME…ANLP) and 49-84 (RVRE…LKSS). 10 residues coordinate Ca(2+): Asp22, Asp24, Asn26, His28, Glu33, Asp62, Asn64, Asp66, Lys68, and Glu73. 4 consecutive Calponin-homology (CH) domains span residues 118 to 234 (EEEK…KIGL), 262 to 373 (LSPE…NKYP), 392 to 501 (TREE…RRYT), and 513 to 621 (KIID…ARGM). Actin-binding regions lie at residues 118–373 (EEEK…NKYP) and 392–621 (TREE…ARGM).

In terms of assembly, monomer. As to expression, expressed by macrophages (at protein level).

It localises to the cytoplasm. It is found in the cytoskeleton. The protein resides in the cell junction. Its subcellular location is the cell projection. The protein localises to the ruffle membrane. In terms of biological role, actin-binding protein. Plays a role in the activation of T-cells. This Danio rerio (Zebrafish) protein is Plastin-2.